The chain runs to 334 residues: MKIKVGINGYGTIGKRVAYAVTKQDDMELIGVTKTKPDFEAYRAKELGIPVYAASEEFLPRFEKAGFEVEGTLNDLLEKVDIIVDATPGGMGEKNKQLYEKAGVKAIFQGGEKAEVAQVSFVAQANYEAALGKDYVRVVSCNTTGLVRTLNAIKDYVDYVYAVMIRRAADPNDIKRGPINAIKPSVTIPSHHGPDVQTVIPINIETSAFVVPTTIMHVHSIMVELKKPLTREDVIDIFENTTRVLLFEKEKGFESTAQLIEFARDLHREWNNLYEIAVWKESINVKGNRLFYIQAVHQESDVIPENIDAIRAMFEIAEKWESIKKTNKSLGILK.

Residues 12–13 (TI) and glycine 111 each bind NAD(+). A D-glyceraldehyde 3-phosphate-binding site is contributed by 140–142 (SCN). The active-site Nucleophile is the cysteine 141. Arginine 167 contributes to the NAD(+) binding site. 192–193 (HG) is a binding site for D-glyceraldehyde 3-phosphate. Glutamine 298 lines the NAD(+) pocket.

The protein belongs to the glyceraldehyde-3-phosphate dehydrogenase family. As to quaternary structure, homotetramer.

Its subcellular location is the encapsulin nanocompartment. It carries out the reaction D-glyceraldehyde 3-phosphate + phosphate + NADP(+) = (2R)-3-phospho-glyceroyl phosphate + NADPH + H(+). It catalyses the reaction D-glyceraldehyde 3-phosphate + phosphate + NAD(+) = (2R)-3-phospho-glyceroyl phosphate + NADH + H(+). The protein operates within carbohydrate degradation; glycolysis; pyruvate from D-glyceraldehyde 3-phosphate: step 1/5. Functionally, possible cargo protein of a type 4B encapsulin nanocompartment. Active in the presence of NAD and NADP, prefers NADP. The chain is Glyceraldehyde-3-phosphate dehydrogenase (gap) from Pyrococcus furiosus (strain ATCC 43587 / DSM 3638 / JCM 8422 / Vc1).